A 167-amino-acid polypeptide reads, in one-letter code: Histidinol dehydrogenase (167 aa).

Zn(2+) is bound by residues Q109 and H112.

The protein belongs to the histidinol dehydrogenase family. Homodimer. Zn(2+) serves as cofactor.

It carries out the reaction L-histidinol + 2 NAD(+) + H2O = L-histidine + 2 NADH + 3 H(+). It functions in the pathway amino-acid biosynthesis; L-histidine biosynthesis; L-histidine from 5-phospho-alpha-D-ribose 1-diphosphate: step 9/9. In terms of biological role, catalyzes the sequential NAD-dependent oxidations of L-histidinol to L-histidinaldehyde and then to L-histidine. The polypeptide is Histidinol dehydrogenase (hisD) (Salmonella enteritidis).